The chain runs to 403 residues: Probable tRNA sulfurtransferase (403 aa).

A THUMP domain is found at 60–165 (QLAEERLKPI…KEGVFLSCRT (106 aa)). ATP-binding positions include 183 to 184 (ML), 208 to 209 (HF), Arg-265, Gly-287, and Gln-296.

This sequence belongs to the ThiI family.

It localises to the cytoplasm. It carries out the reaction [ThiI sulfur-carrier protein]-S-sulfanyl-L-cysteine + a uridine in tRNA + 2 reduced [2Fe-2S]-[ferredoxin] + ATP + H(+) = [ThiI sulfur-carrier protein]-L-cysteine + a 4-thiouridine in tRNA + 2 oxidized [2Fe-2S]-[ferredoxin] + AMP + diphosphate. The catalysed reaction is [ThiS sulfur-carrier protein]-C-terminal Gly-Gly-AMP + S-sulfanyl-L-cysteinyl-[cysteine desulfurase] + AH2 = [ThiS sulfur-carrier protein]-C-terminal-Gly-aminoethanethioate + L-cysteinyl-[cysteine desulfurase] + A + AMP + 2 H(+). It participates in cofactor biosynthesis; thiamine diphosphate biosynthesis. Catalyzes the ATP-dependent transfer of a sulfur to tRNA to produce 4-thiouridine in position 8 of tRNAs, which functions as a near-UV photosensor. Also catalyzes the transfer of sulfur to the sulfur carrier protein ThiS, forming ThiS-thiocarboxylate. This is a step in the synthesis of thiazole, in the thiamine biosynthesis pathway. The sulfur is donated as persulfide by IscS. This Listeria monocytogenes serotype 4a (strain HCC23) protein is Probable tRNA sulfurtransferase.